We begin with the raw amino-acid sequence, 610 residues long: UvrABC system protein C (610 aa).

A GIY-YIG domain is found at S16 to V94. Residues K203–V238 form the UVR domain.

It belongs to the UvrC family. Interacts with UvrB in an incision complex.

The protein localises to the cytoplasm. The UvrABC repair system catalyzes the recognition and processing of DNA lesions. UvrC both incises the 5' and 3' sides of the lesion. The N-terminal half is responsible for the 3' incision and the C-terminal half is responsible for the 5' incision. The chain is UvrABC system protein C from Shewanella frigidimarina (strain NCIMB 400).